A 192-amino-acid chain; its full sequence is Fe/S biogenesis protein NfuA (192 aa).

[4Fe-4S] cluster contacts are provided by Cys-149 and Cys-152.

It belongs to the NfuA family. In terms of assembly, homodimer. [4Fe-4S] cluster is required as a cofactor.

Functionally, involved in iron-sulfur cluster biogenesis. Binds a 4Fe-4S cluster, can transfer this cluster to apoproteins, and thereby intervenes in the maturation of Fe/S proteins. Could also act as a scaffold/chaperone for damaged Fe/S proteins. The sequence is that of Fe/S biogenesis protein NfuA from Tolumonas auensis (strain DSM 9187 / NBRC 110442 / TA 4).